Consider the following 244-residue polypeptide: Transcriptional activator protein Anr (244 aa).

21–149 (APLCLPLSLN…RVMSREIRDD (129 aa)) contacts a nucleoside 3',5'-cyclic phosphate. Positions 159-232 (KTADERIATF…GKEVHILDPI (74 aa)) constitute an HTH crp-type domain. Residues 192–211 (RNEIGNYLGLAVETVSRVFT) constitute a DNA-binding region (H-T-H motif).

Transcriptional activator of anaerobic gene expression. Regulates the expression of the components of the hydrogen cyanide synthase (HcnABC) in a positive manner. May also act as an iron sensor. In Pseudomonas protegens (strain DSM 19095 / LMG 27888 / CFBP 6595 / CHA0), this protein is Transcriptional activator protein Anr.